Consider the following 314-residue polypeptide: Melanoma-associated antigen 12 (314 aa).

The span at 1–14 (MPLEQRSQHCKPEE) shows a compositional bias: basic and acidic residues. The disordered stretch occupies residues 1–72 (MPLEQRSQHC…HSPQGASTLP (72 aa)). The span at 17–44 (EAQGEALGLVGAQAPATEEQETASSSST) shows a compositional bias: low complexity. An MAGE domain is found at 109-308 (LSRKMAELVH…ISYPPLHEWA (200 aa)).

Expressed in many tumors of several types, such as melanoma, head and neck squamous cell carcinoma, lung carcinoma and breast carcinoma, but not in normal tissues except for testes.

In terms of biological role, not known, though may play a role tumor transformation or progression. In vitro promotes cell viability in melanoma cell lines. In Homo sapiens (Human), this protein is Melanoma-associated antigen 12 (MAGEA12).